Here is a 292-residue protein sequence, read N- to C-terminus: Small ribosomal subunit protein uS5 (292 aa).

Residues methionine 1 to glutamate 56 are disordered. Position 2 is an N-acetylalanine (alanine 2). A compositionally biased stretch (gly residues) spans alanine 7–arginine 34. The span at glycine 35–arginine 51 shows a compositional bias: basic residues. Glycyl lysine isopeptide (Lys-Gly) (interchain with G-Cter in ubiquitin) cross-links involve residues lysine 54 and lysine 58. Residues leucine 102–valine 165 form the S5 DRBM domain. Threonine 251 carries the phosphothreonine modification. Lysine 262 is subject to N6-acetyllysine. Phosphoserine is present on serine 263. Threonine 269 is subject to Phosphothreonine. An N6-acetyllysine; alternate modification is found at lysine 274. Residue lysine 274 forms a Glycyl lysine isopeptide (Lys-Gly) (interchain with G-Cter in SUMO1); alternate linkage. Residue lysine 274 forms a Glycyl lysine isopeptide (Lys-Gly) (interchain with G-Cter in SUMO2); alternate linkage. A Glycyl lysine isopeptide (Lys-Gly) (interchain with G-Cter in ubiquitin); alternate cross-link involves residue lysine 274. Residue serine 280 is modified to Phosphoserine.

This sequence belongs to the universal ribosomal protein uS5 family. As to quaternary structure, component of the small ribosomal subunit. Interacts with zinc finger protein ZNF277 (via zinc-finger domains); the interaction is direct; the interaction is extra-ribosomal. Interaction with ZNF277 competes with the binding of RPS2 to protein arginine methyltransferase PRMT3. Citrullinated by PADI4 in the Arg/Gly-rich region. In terms of processing, asymmetric arginine dimethylation by PRMT3 occurs at multiple sites in the Arg/Gly-rich region. Post-translationally, monoubiquitinated at Lys-54 and Lys-58 by RNF10 when a ribosome has stalled during translation, leading to its degradation by the proteasome. Deubiquitinated at Lys-54 and Lys-58 by USP10, preventing degradation by the proteasome and promoting 40S ribosome subunit recycling following ribosome dissociation.

It is found in the cytoplasm. The protein localises to the nucleus. The protein resides in the nucleolus. In terms of biological role, component of the ribosome, a large ribonucleoprotein complex responsible for the synthesis of proteins in the cell. The small ribosomal subunit (SSU) binds messenger RNAs (mRNAs) and translates the encoded message by selecting cognate aminoacyl-transfer RNA (tRNA) molecules. The large subunit (LSU) contains the ribosomal catalytic site termed the peptidyl transferase center (PTC), which catalyzes the formation of peptide bonds, thereby polymerizing the amino acids delivered by tRNAs into a polypeptide chain. The nascent polypeptides leave the ribosome through a tunnel in the LSU and interact with protein factors that function in enzymatic processing, targeting, and the membrane insertion of nascent chains at the exit of the ribosomal tunnel. Plays a role in the assembly and function of the 40S ribosomal subunit. This chain is Small ribosomal subunit protein uS5 (RPS2), found in Oryctolagus cuniculus (Rabbit).